The chain runs to 339 residues: Holliday junction branch migration complex subunit RuvB (339 aa).

The segment at 1–181 (MEERLVSGYE…FGMVHRLEFY (181 aa)) is large ATPase domain (RuvB-L). ATP is bound by residues L20, R21, G62, K65, T66, T67, 128-130 (EDF), R171, Y181, and R218. T66 contacts Mg(2+). The small ATPAse domain (RuvB-S) stretch occupies residues 182 to 252 (SVEELMLIIN…NAKAALDLLE (71 aa)). Residues 255–339 (ELGLDPTDRL…NKNAGELSLW (85 aa)) are head domain (RuvB-H). Residues R310 and R315 each coordinate DNA.

The protein belongs to the RuvB family. Homohexamer. Forms an RuvA(8)-RuvB(12)-Holliday junction (HJ) complex. HJ DNA is sandwiched between 2 RuvA tetramers; dsDNA enters through RuvA and exits via RuvB. An RuvB hexamer assembles on each DNA strand where it exits the tetramer. Each RuvB hexamer is contacted by two RuvA subunits (via domain III) on 2 adjacent RuvB subunits; this complex drives branch migration. In the full resolvosome a probable DNA-RuvA(4)-RuvB(12)-RuvC(2) complex forms which resolves the HJ.

The protein localises to the cytoplasm. It catalyses the reaction ATP + H2O = ADP + phosphate + H(+). Its function is as follows. The RuvA-RuvB-RuvC complex processes Holliday junction (HJ) DNA during genetic recombination and DNA repair, while the RuvA-RuvB complex plays an important role in the rescue of blocked DNA replication forks via replication fork reversal (RFR). RuvA specifically binds to HJ cruciform DNA, conferring on it an open structure. The RuvB hexamer acts as an ATP-dependent pump, pulling dsDNA into and through the RuvAB complex. RuvB forms 2 homohexamers on either side of HJ DNA bound by 1 or 2 RuvA tetramers; 4 subunits per hexamer contact DNA at a time. Coordinated motions by a converter formed by DNA-disengaged RuvB subunits stimulates ATP hydrolysis and nucleotide exchange. Immobilization of the converter enables RuvB to convert the ATP-contained energy into a lever motion, pulling 2 nucleotides of DNA out of the RuvA tetramer per ATP hydrolyzed, thus driving DNA branch migration. The RuvB motors rotate together with the DNA substrate, which together with the progressing nucleotide cycle form the mechanistic basis for DNA recombination by continuous HJ branch migration. Branch migration allows RuvC to scan DNA until it finds its consensus sequence, where it cleaves and resolves cruciform DNA. The sequence is that of Holliday junction branch migration complex subunit RuvB from Carboxydothermus hydrogenoformans (strain ATCC BAA-161 / DSM 6008 / Z-2901).